Consider the following 935-residue polypeptide: Kinesin heavy chain (935 aa).

Positions 5-329 constitute a Kinesin motor domain; sequence NIKVVCRFRP…LRFGARAKSI (325 aa). ATP-binding positions include 87-94 and 237-244; these read GQTGSGKT and GSEKVGKT. Positions 342 to 887 form a coiled coil; the sequence is AELKALLKKV…SQKSQNSLAA (546 aa). 2 disordered regions span residues 400-419 and 898-935; these read APGF…TPVP and RGNG…MNSR.

Belongs to the TRAFAC class myosin-kinesin ATPase superfamily. Kinesin family. Kinesin subfamily.

The protein localises to the cytoplasm. It localises to the cytoskeleton. In terms of biological role, kinesin is a microtubule-associated force-producing protein that may play a role in organelle transport. Its motor activity is directed toward the microtubule's plus end. The speed of this motor is 4-5 times faster than its animal counterparts. The protein is Kinesin heavy chain of Syncephalastrum racemosum (Filamentous fungus).